We begin with the raw amino-acid sequence, 547 residues long: MATMVPSVLWPRACWTLLVCCLLTPGVQGQEFLLRVEPQNPVLSAGGSLFVNCSTDCPSSEKIALETSLSKELVASGMGWAAFNLSNVTGNSRILCSVYCNGSQITGSSNITVYRLPERVELAPLPPWQRVGQNFTLRCQVEGGSPRTSLTVVLLRWEEELSRQPAVEEPAEVTATVLASRDDHGAPFSCRTELDMQPQGLGLFVNTSAPRQLRTFVLPVTPPRLVAPRFLEVETSWPVDCTLDGLFPASEAQVYLALGDQMLNATVMNHGDTLTATATATARADQEGAREIVCNVTLGGERREARENLTVFSFLGPTVNLSEPTAPEGSTVTVSCMAGARVQVTLDGVPAAAPGQPAQLQLNATESDDRRSFFCSATLEVDGEFLHRNSSVQLRVLYGPKIDRATCPQHLKWKDKTTHVLQCQARGNPYPELRCLKEGSSREVPVGIPFFVNVTHNGTYQCQASSSRGKYTLVVVMDIEAGSSHFVPVFVAVLLTLGVVTIVLALMYVFREHKRSGSYHVREESTYLPLTSMQPTQAMGEEPSRAE.

Positions 1-29 are cleaved as a signal peptide; sequence MATMVPSVLWPRACWTLLVCCLLTPGVQG. Residues 30–485 lie on the Extracellular side of the membrane; the sequence is QEFLLRVEPQ…VMDIEAGSSH (456 aa). In terms of domain architecture, Ig-like C2-type 1 spans 46–103; that stretch reads GGSLFVNCSTDCPSSEKIALETSLSKELVASGMGWAAFNLSNVTGNSRILCSVYCNGS. 6 N-linked (GlcNAc...) asparagine glycosylation sites follow: asparagine 52, asparagine 84, asparagine 87, asparagine 101, asparagine 110, and asparagine 134. 2 disulfides stabilise this stretch: cysteine 53-cysteine 96 and cysteine 57-cysteine 100. The 66-residue stretch at 132–197 folds into the Ig-like C2-type 2 domain; sequence GQNFTLRCQV…FSCRTELDMQ (66 aa). Cysteine 139 and cysteine 190 are joined by a disulfide. N-linked (GlcNAc...) asparagine glycosylation is found at asparagine 206, asparagine 264, asparagine 295, asparagine 308, asparagine 320, asparagine 363, asparagine 389, asparagine 453, and asparagine 457. Residues 234–301 enclose the Ig-like C2-type 3 domain; it reads ETSWPVDCTL…IVCNVTLGGE (68 aa). Residues cysteine 241 and cysteine 294 are joined by a disulfide bond. The Ig-like C2-type 4 domain occupies 329-382; it reads GSTVTVSCMAGARVQVTLDGVPAAAPGQPAQLQLNATESDDRRSFFCSATLEVD. Cysteines 336 and 375 form a disulfide. In terms of domain architecture, Ig-like C2-type 5 spans 416–469; it reads KTTHVLQCQARGNPYPELRCLKEGSSREVPVGIPFFVNVTHNGTYQCQASSSRG. A disulfide bond links cysteine 423 and cysteine 462. The helical transmembrane segment at 486-510 threads the bilayer; that stretch reads FVPVFVAVLLTLGVVTIVLALMYVF. At 511–547 the chain is on the cytoplasmic side; that stretch reads REHKRSGSYHVREESTYLPLTSMQPTQAMGEEPSRAE.

This sequence belongs to the immunoglobulin superfamily. ICAM family. Interacts with moesin/MSN. In terms of processing, upon stimulation by a physiologic stimuli becomes rapidly and transiently phosphorylated on serine residues. As to expression, leukocytes.

It is found in the membrane. ICAM proteins are ligands for the leukocyte adhesion protein LFA-1 (integrin alpha-L/beta-2). ICAM3 is also a ligand for integrin alpha-D/beta-2. In association with integrin alpha-L/beta-2, contributes to apoptotic neutrophil phagocytosis by macrophages. The sequence is that of Intercellular adhesion molecule 3 (ICAM3) from Pan troglodytes (Chimpanzee).